Reading from the N-terminus, the 527-residue chain is Probable malate:quinone oxidoreductase (527 aa).

Belongs to the MQO family. The cofactor is FAD.

It catalyses the reaction (S)-malate + a quinone = a quinol + oxaloacetate. The protein operates within carbohydrate metabolism; tricarboxylic acid cycle; oxaloacetate from (S)-malate (quinone route): step 1/1. This is Probable malate:quinone oxidoreductase from Pectobacterium carotovorum subsp. carotovorum (strain PC1).